Reading from the N-terminus, the 130-residue chain is UPF0146 protein AF_0739.1 (130 aa).

It belongs to the UPF0146 family.

This is UPF0146 protein AF_0739.1 from Archaeoglobus fulgidus (strain ATCC 49558 / DSM 4304 / JCM 9628 / NBRC 100126 / VC-16).